The primary structure comprises 403 residues: Nucleoporin nup44 (403 aa).

Polar residues-rich tracts occupy residues 1 to 31 and 67 to 124; these read MAFS…TTKP and FGKT…DETN. Positions 1-124 are disordered; that stretch reads MAFSFGQQGS…NPTKPVDETN (124 aa).

Its subcellular location is the cytoplasm. It localises to the nucleus. Functions as a component of the nuclear pore complex (NPC). NPC components, collectively referred to as nucleoporins (NUPs), can play the role of both NPC structural components and of docking or interaction partners for transiently associated nuclear transport factors. Active directional transport is assured by both, a Phe-Gly (FG) repeat affinity gradient for these transport factors across the NPC and a transport cofactor concentration gradient across the nuclear envelope. The sequence is that of Nucleoporin nup44 (nup44) from Schizosaccharomyces pombe (strain 972 / ATCC 24843) (Fission yeast).